The primary structure comprises 631 residues: VPS9 domain-containing protein 1 (631 aa).

S116 carries the phosphoserine modification. Residues 187 to 221 (RQMMENLVIAKAREETLQRKMEERRLRLQEAANRR) are a coiled coil. The disordered stretch occupies residues 318–379 (PNPGSRRLRP…ASGLPDKDSS (62 aa)). Residues 337-362 (PPEPSAAPRPQDSPPTPPLQPGPVGS) show a composition bias toward pro residues. Residues 467 to 630 (RAREAALSRS…VELLPRGGLA (164 aa)) enclose the VPS9 domain.

As to expression, ubiquitous.

This Homo sapiens (Human) protein is VPS9 domain-containing protein 1 (VPS9D1).